The chain runs to 340 residues: Ferredoxin--NADP reductase (340 aa).

Residues Thr20, Asp39, Gln47, Tyr52, Val92, Phe126, Asp293, and Thr334 each coordinate FAD.

It belongs to the ferredoxin--NADP reductase type 2 family. Homodimer. FAD serves as cofactor.

It carries out the reaction 2 reduced [2Fe-2S]-[ferredoxin] + NADP(+) + H(+) = 2 oxidized [2Fe-2S]-[ferredoxin] + NADPH. In Gluconobacter oxydans (strain 621H) (Gluconobacter suboxydans), this protein is Ferredoxin--NADP reductase.